The primary structure comprises 170 residues: MALLNVLIYPDERLKTVAEPVSVFDEELQTFIDNMFETMYHEEGIGLAATQVNVHKRIITIDIEGTKENQIVLINPEILESFGETGIEEGCLSLPGLRGFVPRKETVKVKAQNRQGEDFMLDADGLLAICIQHEIDHLNGIVFADHLSPLKRQRMKEKLLKLQKQIAKNR.

Cysteine 91 and histidine 133 together coordinate Fe cation. The active site involves glutamate 134. Histidine 137 provides a ligand contact to Fe cation.

This sequence belongs to the polypeptide deformylase family. Requires Fe(2+) as cofactor.

The enzyme catalyses N-terminal N-formyl-L-methionyl-[peptide] + H2O = N-terminal L-methionyl-[peptide] + formate. Functionally, removes the formyl group from the N-terminal Met of newly synthesized proteins. Requires at least a dipeptide for an efficient rate of reaction. N-terminal L-methionine is a prerequisite for activity but the enzyme has broad specificity at other positions. This chain is Peptide deformylase, found in Histophilus somni (strain 129Pt) (Haemophilus somnus).